The chain runs to 90 residues: Small ribosomal subunit protein uS15c (90 aa).

The protein belongs to the universal ribosomal protein uS15 family. In terms of assembly, part of the 30S ribosomal subunit.

The protein resides in the plastid. It is found in the chloroplast. This chain is Small ribosomal subunit protein uS15c (rps15), found in Secale cereale (Rye).